The sequence spans 262 residues: MISTACWRDCMPQTVNKQAVAAAFGRAARSYNQHAELQRQCGERLLEHARPGNALRVLDAGCGTGWFSQRWRAGGHWVTALDLSEKMLQHARENQAADCYLPGDIEALPFADASFDRCWSNLAVQWCSSLPLALRELRRVTKPGGQVLFSTLTEGSLKEVSAAWQQIGRSAPLNRFASLPVIEQAAGSLALTLAGYTLTLAFPDVLSALRSLKGIGATHLHQGRSNGMISRRELQQLEQVWQRDARGCLLSYQLVSGVIERE.

It belongs to the methyltransferase superfamily.

It carries out the reaction malonyl-[ACP] + S-adenosyl-L-methionine = malonyl-[ACP] methyl ester + S-adenosyl-L-homocysteine. It functions in the pathway cofactor biosynthesis; biotin biosynthesis. Functionally, converts the free carboxyl group of a malonyl-thioester to its methyl ester by transfer of a methyl group from S-adenosyl-L-methionine (SAM). It allows to synthesize pimeloyl-ACP via the fatty acid synthetic pathway. In Erwinia pyrifoliae (strain DSM 12163 / CIP 106111 / Ep16/96), this protein is Malonyl-[acyl-carrier protein] O-methyltransferase.